Consider the following 338-residue polypeptide: Heat-inducible transcription repressor HrcA (338 aa).

This sequence belongs to the HrcA family.

Negative regulator of class I heat shock genes (grpE-dnaK-dnaJ and groELS operons). Prevents heat-shock induction of these operons. This chain is Heat-inducible transcription repressor HrcA, found in Bacillus mycoides (strain KBAB4) (Bacillus weihenstephanensis).